A 175-amino-acid polypeptide reads, in one-letter code: Myosin regulatory light chain 2, atrial isoform (175 aa).

Position 2 is an N-acetylalanine (Ala2). 2 positions are modified to phosphoserine: Ser22 and Ser23. EF-hand domains lie at 32–67 (AQIQEFKEAFSCIDQNRDGIICKADLRETYSQLGKV), 102–137 (DPEEAILSAFRMFDPSGKGVVNKDEFKQLLLTQADK), and 138–173 (FSPAEVEQMFALTPMDLAGNIDYKSLCYIITHGDEK). The Ca(2+) site is built by Asp45, Asn47, Asp49, and Asp56.

Myosin is a hexamer of 2 heavy chains and 4 light chains. In terms of tissue distribution, predominantly expressed in adult atrial muscle.

The sequence is that of Myosin regulatory light chain 2, atrial isoform (MYL7) from Homo sapiens (Human).